The following is a 465-amino-acid chain: Serine carboxypeptidase-like 46 (465 aa).

An N-terminal signal peptide occupies residues 1 to 25; it reads MPRLQCLTMATSLILLLQALSLVSS. Disulfide bonds link Cys-88–Cys-344, Cys-245–Cys-263, and Cys-288–Cys-313. Asn-137 and Asn-170 each carry an N-linked (GlcNAc...) asparagine glycan. Residue Ser-179 is part of the active site. Asn-246 carries N-linked (GlcNAc...) asparagine glycosylation. Catalysis depends on residues Asp-381 and His-438.

Belongs to the peptidase S10 family. As to expression, ubiquitous.

Its subcellular location is the secreted. Probable carboxypeptidase. The sequence is that of Serine carboxypeptidase-like 46 (SCPL46) from Arabidopsis thaliana (Mouse-ear cress).